The sequence spans 534 residues: Protein tweety homolog 2 (534 aa).

At 1 to 44 (MQAARVDYIAPWWVVWLHSVPHVGLRLQPVNSTFSPGDESYQES) the chain is on the extracellular side. Residue asparagine 31 is glycosylated (N-linked (GlcNAc...) asparagine). Residues 45-65 (LLFLGLVAAVCLGLNLIFLVA) form a helical membrane-spanning segment. Residues 66-87 (YLVCACHCRRDDAVQTKQHHSC) lie on the Cytoplasmic side of the membrane. The helical transmembrane segment at 88–108 (CITWTAVVAGLICCAAVGVGF) threads the bilayer. Over 109–213 (YGNSETNDGA…QTGYVEYYRW (105 aa)) the chain is Extracellular. Residues glutamate 113 and aspartate 116 each coordinate Ca(2+). N-linked (GlcNAc) asparagine glycosylation occurs at asparagine 129. Residues 164-166 (RGD) carry the RGD motif. Residue threonine 199 is modified to Phosphothreonine. Residues 214–234 (LSYLLLFILDLVICLIACLGL) traverse the membrane as a helical segment. Topologically, residues 235 to 240 (AKRSKC) are cytoplasmic. A helical membrane pass occupies residues 241–261 (LLASMLCCGALSLLLSWASLA). The Extracellular segment spans residues 262–388 (ADGSAAVATS…AGICYDGLQG (127 aa)). Intrachain disulfides connect cysteine 274–cysteine 382 and cysteine 300–cysteine 367. A glycan (N-linked (GlcNAc...) asparagine) is linked at asparagine 283. Asparagine 352 is a glycosylation site (N-linked (GlcNAc) asparagine). Residues 389 to 409 (LLYLGLFSFLAALAFSTMICA) traverse the membrane as a helical segment. The Cytoplasmic portion of the chain corresponds to 410–534 (GPRAWKHFTT…LRHYGNQFPA (125 aa)). Serine 504 is subject to Phosphoserine. Residues 506 to 509 (PPTY) carry the PY-motif; mediates interaction with NEDD4L motif.

This sequence belongs to the tweety family. Homodimer. Forms cis-homodimers in the presence of Ca(+2) and forms monomers and trans-dimers in the absence of Ca(2+). Interacts with NEDD4L. N- Glycosylated. Contains high-mannose, hybrid and complex oligosaccharides. Post-translationally, ubiquitinated by NEDD4L, leading to its proteasomal degradation. As to expression, expressed at higher level in brain and testis and at lower levels in heart, ovary, spleen and peripheral blood leukocytes. Up-regulated in 13 of 16 renal cell carcinoma samples examined. Up-regulated in colon carcinoma.

The protein localises to the cell membrane. The catalysed reaction is chloride(in) = chloride(out). It carries out the reaction L-glutamate(out) = L-glutamate(in). Calcium-independent, swelling-dependent volume-regulated anion channel (VRAC-swell) which plays a pivotal role in the process of regulatory volume decrease (RVD) in the brain through the efflux of anions like chloride and organic osmolytes like glutamate. Probable large-conductance Ca(2+)-activated chloride channel. The chain is Protein tweety homolog 2 (TTYH2) from Homo sapiens (Human).